The sequence spans 344 residues: Fructose-1,6-bisphosphatase class 1 (344 aa).

Residues Glu90, Asp109, Leu111, and Asp112 each coordinate Mg(2+). Residues 112 to 115 (DGSS) and Asn200 each bind substrate. A Mg(2+)-binding site is contributed by Glu271.

This sequence belongs to the FBPase class 1 family. In terms of assembly, homotetramer. The cofactor is Mg(2+).

The protein resides in the cytoplasm. The enzyme catalyses beta-D-fructose 1,6-bisphosphate + H2O = beta-D-fructose 6-phosphate + phosphate. It participates in carbohydrate biosynthesis; gluconeogenesis. The protein is Fructose-1,6-bisphosphatase class 1 of Nitrobacter vulgaris.